Reading from the N-terminus, the 122-residue chain is Large ribosomal subunit protein uL14 (122 aa).

Belongs to the universal ribosomal protein uL14 family. As to quaternary structure, part of the 50S ribosomal subunit. Forms a cluster with proteins L3 and L19. In the 70S ribosome, L14 and L19 interact and together make contacts with the 16S rRNA in bridges B5 and B8.

Its function is as follows. Binds to 23S rRNA. Forms part of two intersubunit bridges in the 70S ribosome. The chain is Large ribosomal subunit protein uL14 from Syntrophomonas wolfei subsp. wolfei (strain DSM 2245B / Goettingen).